The primary structure comprises 345 residues: GTP cyclohydrolase-2 (345 aa).

Positions 1–27 (MTIDNYDNSKQDSSKYEVSGTGDGRNG) are disordered. Position 143 to 147 (143 to 147 (RIHSE)) interacts with GTP. Zn(2+) contacts are provided by C148, C159, and C161. GTP contacts are provided by residues Q164, 197 to 199 (EGR), and T219. The Proton acceptor role is filled by D231. Catalysis depends on R233, which acts as the Nucleophile. Residues T254 and K259 each coordinate GTP. The interval 312–345 (PLKLHTNPQPTETSEAQNQNRMNSALSSTSTLAI) is disordered. Residues 317–345 (TNPQPTETSEAQNQNRMNSALSSTSTLAI) are compositionally biased toward polar residues.

The protein belongs to the GTP cyclohydrolase II family. It depends on Zn(2+) as a cofactor.

It carries out the reaction GTP + 4 H2O = 2,5-diamino-6-hydroxy-4-(5-phosphoribosylamino)-pyrimidine + formate + 2 phosphate + 3 H(+). It participates in cofactor biosynthesis; riboflavin biosynthesis; 5-amino-6-(D-ribitylamino)uracil from GTP: step 1/4. Catalyzes the conversion of GTP to 2,5-diamino-6-ribosylamino-4(3H)-pyrimidinone 5'-phosphate (DARP), formate and pyrophosphate. This chain is GTP cyclohydrolase-2 (RIB1), found in Saccharomyces cerevisiae (strain ATCC 204508 / S288c) (Baker's yeast).